The chain runs to 371 residues: Chaperone protein DnaJ (371 aa).

The J domain occupies 5–70 (CYYEILNISK…SKRSRYDQFG (66 aa)). Residues 127–204 (GVEKEITIPR…CYGNGKVKKQ (78 aa)) form a CR-type zinc finger. Positions 140, 143, 156, 159, 178, 181, 192, and 195 each coordinate Zn(2+). CXXCXGXG motif repeat units lie at residues 140 to 147 (CDSCDGTG), 156 to 163 (CHACHGQG), 178 to 185 (CPVCNGTG), and 192 to 199 (CDACYGNG).

Belongs to the DnaJ family. As to quaternary structure, homodimer. The cofactor is Zn(2+).

The protein localises to the cytoplasm. Participates actively in the response to hyperosmotic and heat shock by preventing the aggregation of stress-denatured proteins and by disaggregating proteins, also in an autonomous, DnaK-independent fashion. Unfolded proteins bind initially to DnaJ; upon interaction with the DnaJ-bound protein, DnaK hydrolyzes its bound ATP, resulting in the formation of a stable complex. GrpE releases ADP from DnaK; ATP binding to DnaK triggers the release of the substrate protein, thus completing the reaction cycle. Several rounds of ATP-dependent interactions between DnaJ, DnaK and GrpE are required for fully efficient folding. Also involved, together with DnaK and GrpE, in the DNA replication of plasmids through activation of initiation proteins. This is Chaperone protein DnaJ from Francisella tularensis subsp. holarctica (strain LVS).